The chain runs to 309 residues: Vomeronasal type-1 receptor 52 (309 aa).

Over 1–19 (MNKDHTLYCSVYIRNAFFS) the chain is Extracellular. The helical transmembrane segment at 20–40 (EIGIGISANSCLLLFHTFMFI) threads the bilayer. Topologically, residues 41 to 49 (RGHRPRLTD) are cytoplasmic. The helical transmembrane segment at 50–70 (LPIGFVALIHLVMLLLAAYIT) threads the bilayer. The Extracellular segment spans residues 71–93 (EDFFMSSGGWDDITCKLVIFLHR). A disulfide bridge links Cys-85 with Cys-172. A helical membrane pass occupies residues 94 to 114 (FFRSLSVCATCLLSVFQAIIL). Residues 115 to 134 (CPQSSHLAKLKQNSPHQLSY) are Cytoplasmic-facing. Residues 135-155 (FFIFLSIFYTSISSHILIAAI) form a helical membrane-spanning segment. The Extracellular segment spans residues 156–187 (PTQNITFVNLIYITNSCSFLPLSSSMQHTFST). Asn-159 is a glycosylation site (N-linked (GlcNAc...) asparagine). Residues 188–208 (LLAFRNVFVIGLMGLSTCYMA) form a helical membrane-spanning segment. At 209-238 (TLLCRHKTRSQRLQNSKLSPKATPEQRALR) the chain is on the cytoplasmic side. The chain crosses the membrane as a helical span at residues 239 to 259 (TILMLMSFFLLMSTFDSIISY). Residues 260 to 268 (SRTILQGNP) lie on the Extracellular side of the membrane. A helical transmembrane segment spans residues 269 to 289 (LPFCFQILVAHSYAAVSPLLV). The Cytoplasmic segment spans residues 290 to 309 (LSNEKRITNLLISMYEKIVL).

The protein belongs to the G-protein coupled receptor 1 family.

The protein localises to the cell membrane. Putative pheromone receptor implicated in the regulation of social and reproductive behavior. This chain is Vomeronasal type-1 receptor 52 (Vmn1r52), found in Mus musculus (Mouse).